The chain runs to 365 residues: Synapse-associated protein 1 (365 aa).

The interval 1-65 (MFGGLSSWLG…QPPTEDPQFL (65 aa)) is disordered. Residues 52 to 62 (EQQQQPPTEDP) are compositionally biased toward low complexity. Residues 172 to 224 (VQFNFDFDQMYPVALVMLQEDELLSKMRFALVPKLVKEEVFWRNYFYRISLIK) enclose the BSD domain. The segment at 237–259 (QASGKEEKSSNRDDNLPLTEAVR) is disordered. Positions 240 to 251 (GKEEKSSNRDDN) are enriched in basic and acidic residues. Threonine 262 bears the Phosphothreonine mark. Residues serine 283, serine 298, and serine 327 each carry the phosphoserine modification. The segment at 344–365 (VAESEKRDENWDKEIEKMLQES) is disordered. Over residues 346 to 365 (ESEKRDENWDKEIEKMLQES) the composition is skewed to basic and acidic residues.

As to quaternary structure, interacts (via phosphorylated form and BSD domain) with AKT1; this interaction is enhanced in a mTORC2-mediated manner in response to epidermal growth factor (EGF) stimulation and activates AKT1. In terms of processing, phosphorylated. Phosphorylation increases in a mTORC2-mediated manner in response to epidermal growth factor (EGF) stimulation. As to expression, expressed in the liver, kidney, skeletal muscle and in white and brown adipose tissues. Expressed in the cortex, cerebellum, thalamus, hippocampus, braistem, olfactory bulb, spinal cord and striatum of the brain. Expressed in most neuropil regions containing glutamatergic synaptic terminals. Expressed in the CA1, CA2 and CA3 perikarya of the hippocampus. Expressed in neurons and Purkinje cells (at the protein level).

The protein localises to the cytoplasm. It is found in the perinuclear region. It localises to the golgi apparatus. The protein resides in the perikaryon. Its subcellular location is the cell projection. The protein localises to the axon. It is found in the dendrite. It localises to the growth cone. The protein resides in the presynaptic cell membrane. Its subcellular location is the postsynaptic cell membrane. The protein localises to the membrane. Its function is as follows. Plays a role in adipocyte differentiation by promoting mTORC2-mediated phosphorylation of AKT1 at 'Ser-473' after growth factor stimulation. In Mus musculus (Mouse), this protein is Synapse-associated protein 1.